A 185-amino-acid polypeptide reads, in one-letter code: Ribosome-recycling factor (185 aa).

The protein belongs to the RRF family.

It is found in the cytoplasm. Functionally, responsible for the release of ribosomes from messenger RNA at the termination of protein biosynthesis. May increase the efficiency of translation by recycling ribosomes from one round of translation to another. The chain is Ribosome-recycling factor from Geobacter metallireducens (strain ATCC 53774 / DSM 7210 / GS-15).